Here is an 876-residue protein sequence, read N- to C-terminus: uncharacterized protein (876 aa).

Basic and acidic residues predominate over residues 37–48 (DEDKSNNDDRRS). Disordered stretches follow at residues 37–67 (DEDK…KGSN), 112–155 (DESG…RNIK), 226–254 (KKKS…TKSQ), and 330–353 (MMMD…SRSI). Phosphoserine is present on residues Ser-48 and Ser-51. The span at 49-58 (LASILDSSSS) shows a compositional bias: low complexity. Residues 115–131 (GFTSDNNADYFSGNSYS) show a composition bias toward polar residues. Phosphoserine occurs at positions 360, 510, 552, and 577. Residues 490–513 (PEVTKQKNTSGPKPGFSHSKSADA) form a disordered region. Disordered regions lie at residues 661–728 (ITGG…RSPQ) and 750–876 (RHSL…FGRL). The span at 689 to 699 (SKSKSRSSSKS) shows a compositional bias: basic residues. Low complexity predominate over residues 717-726 (SSASASRSRS). Ser-775 is subject to Phosphoserine. Composition is skewed to low complexity over residues 794 to 808 (NKDS…SSSL) and 842 to 854 (FSFF…SPSS).

This is an uncharacterized protein from Saccharomyces cerevisiae (strain ATCC 204508 / S288c) (Baker's yeast).